Reading from the N-terminus, the 660-residue chain is ATP-dependent zinc metalloprotease FtsH (660 aa).

Residues 1–20 (MMPSSQRPSPRGSRQSPSPD) are disordered. Residues 1–24 (MMPSSQRPSPRGSRQSPSPDQRGR) are Cytoplasmic-facing. The helical transmembrane segment at 25–45 (IAFAILATLVVAVLLLTLFSH) threads the bilayer. Over 46–118 (APSGQPLGYS…VQVSYITPGP (73 aa)) the chain is Extracellular. A helical membrane pass occupies residues 119-139 (GIASTIIEYVIFFGIFIGIWV). Residues 140–660 (YLTRRTQGSV…ASHDDTDPVS (521 aa)) are Cytoplasmic-facing. 213 to 220 (GPPGTGKT) contacts ATP. His-435 provides a ligand contact to Zn(2+). The active site involves Glu-436. 2 residues coordinate Zn(2+): His-439 and Asp-511.

This sequence in the central section; belongs to the AAA ATPase family. It in the C-terminal section; belongs to the peptidase M41 family. Homohexamer. Zn(2+) serves as cofactor.

Its subcellular location is the cell membrane. In terms of biological role, acts as a processive, ATP-dependent zinc metallopeptidase for both cytoplasmic and membrane proteins. Plays a role in the quality control of integral membrane proteins. This chain is ATP-dependent zinc metalloprotease FtsH, found in Acidimicrobium ferrooxidans (strain DSM 10331 / JCM 15462 / NBRC 103882 / ICP).